The sequence spans 289 residues: 4-diphosphocytidyl-2-C-methyl-D-erythritol kinase (289 aa).

The active site involves lysine 10. 94–104 lines the ATP pocket; the sequence is PVAAGLAGGSS. Aspartate 136 is a catalytic residue.

This sequence belongs to the GHMP kinase family. IspE subfamily.

It catalyses the reaction 4-CDP-2-C-methyl-D-erythritol + ATP = 4-CDP-2-C-methyl-D-erythritol 2-phosphate + ADP + H(+). Its pathway is isoprenoid biosynthesis; isopentenyl diphosphate biosynthesis via DXP pathway; isopentenyl diphosphate from 1-deoxy-D-xylulose 5-phosphate: step 3/6. Its function is as follows. Catalyzes the phosphorylation of the position 2 hydroxy group of 4-diphosphocytidyl-2C-methyl-D-erythritol. This Bacillus anthracis protein is 4-diphosphocytidyl-2-C-methyl-D-erythritol kinase.